A 240-amino-acid chain; its full sequence is tRNA (guanine-N(1)-)-methyltransferase (240 aa).

S-adenosyl-L-methionine is bound by residues Gly-110 and 129 to 134 (LGDFVL).

This sequence belongs to the RNA methyltransferase TrmD family. Homodimer.

It localises to the cytoplasm. The catalysed reaction is guanosine(37) in tRNA + S-adenosyl-L-methionine = N(1)-methylguanosine(37) in tRNA + S-adenosyl-L-homocysteine + H(+). Its function is as follows. Specifically methylates guanosine-37 in various tRNAs. The polypeptide is tRNA (guanine-N(1)-)-methyltransferase (Clostridium botulinum (strain Loch Maree / Type A3)).